The sequence spans 29 residues: GLPVCGETCFGGRCNTPGCTCSYPICTRN.

The segment at residues 1–29 (GLPVCGETCFGGRCNTPGCTCSYPICTRN) is a cross-link (cyclopeptide (Gly-Asn)). Cystine bridges form between Cys-5/Cys-19, Cys-9/Cys-21, and Cys-14/Cys-26.

Post-translationally, this is a cyclic peptide.

In terms of biological role, probably participates in a plant defense mechanism. Has moderate levels of cytotoxic activity, active against a human lymphoma cell line with an IC(50) of &gt;30 uM. The sequence is that of Cyclotide vibi-D from Viola biflora (Yellow wood violet).